An 874-amino-acid polypeptide reads, in one-letter code: Alanine--tRNA ligase (874 aa).

Positions 562, 566, 664, and 668 each coordinate Zn(2+).

Belongs to the class-II aminoacyl-tRNA synthetase family. It depends on Zn(2+) as a cofactor.

The protein resides in the cytoplasm. The enzyme catalyses tRNA(Ala) + L-alanine + ATP = L-alanyl-tRNA(Ala) + AMP + diphosphate. In terms of biological role, catalyzes the attachment of alanine to tRNA(Ala) in a two-step reaction: alanine is first activated by ATP to form Ala-AMP and then transferred to the acceptor end of tRNA(Ala). Also edits incorrectly charged Ser-tRNA(Ala) and Gly-tRNA(Ala) via its editing domain. This chain is Alanine--tRNA ligase, found in Shewanella loihica (strain ATCC BAA-1088 / PV-4).